Here is a 208-residue protein sequence, read N- to C-terminus: FMN-dependent NADH:quinone oxidoreductase 1 (208 aa).

Serine 10 serves as a coordination point for FMN.

The protein belongs to the azoreductase type 1 family. As to quaternary structure, homodimer. It depends on FMN as a cofactor.

It carries out the reaction 2 a quinone + NADH + H(+) = 2 a 1,4-benzosemiquinone + NAD(+). The catalysed reaction is N,N-dimethyl-1,4-phenylenediamine + anthranilate + 2 NAD(+) = 2-(4-dimethylaminophenyl)diazenylbenzoate + 2 NADH + 2 H(+). Functionally, quinone reductase that provides resistance to thiol-specific stress caused by electrophilic quinones. Contributes to resistance to 2-methylhydroquinone (2-MHQ) and catechol. In terms of biological role, also exhibits azoreductase activity. Catalyzes the reductive cleavage of the azo bond in aromatic azo compounds to the corresponding amines. In Bacillus subtilis (strain 168), this protein is FMN-dependent NADH:quinone oxidoreductase 1.